The primary structure comprises 28 residues: 3,4-dihydroxybenzoate decarboxylase (28 aa).

In terms of assembly, homopentamer.

The catalysed reaction is 3,4-dihydroxybenzoate + H(+) = catechol + CO2. With respect to regulation, inhibited by oxygen. Completely inhibited by HgCl(2). Partially inhibited by ZnSO(4), 2,3,4-trihydroxybeonzoate and 3,4,5-trihydroxybeonzoate. Unaffected by KCl, MnCl(2) or EDTA. Not stimulated by thiamine phosphate, pyridoxal 5'-phosphate or biotin. Not inhibited by hydroxylamine, NaBH(4) or avidin. Functionally, reversibly catalyzes the decarboxylation of 3,4-dihydroxybenzoate to catechol. Inactive toward 4-hydroxybenzoate and other benzoate derivatives. The sequence is that of 3,4-dihydroxybenzoate decarboxylase from Sedimentibacter hydroxybenzoicus (Clostridium hydroxybenzoicum).